Reading from the N-terminus, the 201-residue chain is Large ribosomal subunit protein uL4 (201 aa).

The disordered stretch occupies residues Arg44 to Ala68.

Belongs to the universal ribosomal protein uL4 family. Part of the 50S ribosomal subunit.

Its function is as follows. One of the primary rRNA binding proteins, this protein initially binds near the 5'-end of the 23S rRNA. It is important during the early stages of 50S assembly. It makes multiple contacts with different domains of the 23S rRNA in the assembled 50S subunit and ribosome. Functionally, forms part of the polypeptide exit tunnel. This Buchnera aphidicola subsp. Acyrthosiphon pisum (strain 5A) protein is Large ribosomal subunit protein uL4.